A 181-amino-acid chain; its full sequence is ATP-dependent protease subunit HslV (181 aa).

T7 is an active-site residue. Residues G166, C169, and T172 each contribute to the Na(+) site.

It belongs to the peptidase T1B family. HslV subfamily. A double ring-shaped homohexamer of HslV is capped on each side by a ring-shaped HslU homohexamer. The assembly of the HslU/HslV complex is dependent on binding of ATP.

The protein localises to the cytoplasm. It catalyses the reaction ATP-dependent cleavage of peptide bonds with broad specificity.. Its activity is regulated as follows. Allosterically activated by HslU binding. Functionally, protease subunit of a proteasome-like degradation complex believed to be a general protein degrading machinery. This is ATP-dependent protease subunit HslV from Delftia acidovorans (strain DSM 14801 / SPH-1).